The chain runs to 473 residues: MDNNNNNNTFSSLDNVMTNQNPLLMDFIPSREDSTSFSTMLPWNTIRSDPLQMGGFDIFNSMLTNKYLSSSPRSIDVQDNRNVEFMAPPPHPPPLHPLDHLRHYDDSSNNMWGFEANSEFQAFSGVVGPSEPMMSTFGEEDFPFLISNKRNNELSLSLASDVSDECSEISLCAATRLASEQASCSSKDISNNVVTQGFSQLIFGSKYLHSVQEILSHFAAYSLDYSSRGTESGAASSAFTSRFENITEFLDGDSNNSEAGFGSTFQRRALEAKKTHLLDLLQMVDDRYSHCVDEIHTVISAFHAATELDPQLHTRFALQTVSFLYKNLRERICKKIISMGSVLERGKDKTQETSMFHQHCLLQQLKRKNHQIWRPQRGLPEKSVSVLRNWMFQNFLHPYPKDSEKHLLAIRSGLTRSQVSNWFINARVRLWKPMIEEMYAEMNKRKLNNSHIQPNGPTLRMPKSVMMSQAMHK.

The segment at 205–221 (SKYLHSVQEILSHFAAY) is SR/KY domain. The tract at residues 266–336 (QRRALEAKKT…NLRERICKKI (71 aa)) is BELL domain. The segment at residues 372 to 434 (IWRPQRGLPE…NARVRLWKPM (63 aa)) is a DNA-binding region (homeobox). The interval 448–473 (NNSHIQPNGPTLRMPKSVMMSQAMHK) is disordered.

Belongs to the TALE/BELL homeobox family. May form heterodimeric complex with the TALE/KNOX protein STM. Most abundant in flowers.

Its subcellular location is the nucleus. Its function is as follows. Transcription factor which may be involved in the signal transduction pathway downstream of the COP1 gene. Controls floral competency as a specific activator of FLC expression. Is responsive of the nuclear import of SHOOT MERISTEMLESS (STM). The protein is Homeobox protein ATH1 (ATH1) of Arabidopsis thaliana (Mouse-ear cress).